We begin with the raw amino-acid sequence, 99 residues long: VEILLGGEDGSLAFIPSNFSVPSGEKITFKNNAGFPHNVVFDEDEVPSGVDSAKISMSEDDLLNAPGETYSVTLTESGTYKFYCSPHQGAGMVGKVTVN.

Residues 1–99 (VEILLGGEDG…AGMVGKVTVN (99 aa)) form the Plastocyanin-like domain. H37, C84, H87, and M92 together coordinate Cu cation.

Belongs to the plastocyanin family. The cofactor is Cu(2+).

The protein localises to the plastid. Its subcellular location is the chloroplast thylakoid membrane. Functionally, participates in electron transfer between P700 and the cytochrome b6-f complex in photosystem I. The chain is Plastocyanin (PETE) from Sambucus nigra (European elder).